Consider the following 1418-residue polypeptide: Alpha-latrotoxin-Lhe1a (1418 aa).

An N-terminal signal peptide occupies residues 1-20; the sequence is MIFVGETMERANHSLVRLRR. The furin-like endopeptidase recognition region stretch occupies residues 17–20; that stretch reads RLRR. The helix H8 is the probable transmembrane region of the tetrameric pore inserted in the target cell membrane stretch occupies residues 238–257; that stretch reads VLYALLYGTQTYISVMFFLL. Residues cysteine 413 and cysteine 1066 are joined by a disulfide bond. ANK repeat units follow at residues 458 to 489, 490 to 521, 525 to 554, 559 to 589, 593 to 622, 626 to 656, 660 to 690, 695 to 723, 729 to 758, 762 to 791, 795 to 824, 828 to 857, 862 to 891, 895 to 924, 928 to 957, 971 to 1003, 1004 to 1033, 1035 to 1064, 1068 to 1097, 1101 to 1131, 1137 to 1166, and 1170 to 1199; these read LYNA…ATFD, QGRT…ELNQ, KGYT…SINS, FLQT…NINE, DGFT…DVNA, KGLT…DINA, NNMT…NANV, GLLS…NVNV, GGIT…NIEQ, EKYT…NFEA, SGAT…NWRD, NGQM…TVLD, NSDT…DINT, NGHA…NVYI, NGMN…KFEW, EECA…GNFN, ICGP…SVDG, KTDT…KVNH, NGMT…DFRR, RGAT…DINI, DKET…DVTI, and YDKT…KFRR. The 4C4.1 epitope stretch occupies residues 1026–1032; the sequence is EEVLSVD. Residues 1196–1199 form a furin-like endopeptidase recognition region region; the sequence is KFRR. The propeptide occupies 1200–1418; it reads EYKSSYGEHS…SEKKIQKISI (219 aa).

The protein belongs to the cationic peptide 01 (latrotoxin) family. 03 (alpha-latrotoxin) subfamily. In terms of assembly, homotetramer in membranes. Post-translationally, processed by furin-like proteases at both the N- and C-termini. In terms of tissue distribution, expressed in venom gland, cephalothorax, and abdomen tissues from both males and females.

The protein resides in the secreted. It localises to the target cell membrane. Functionally, presynaptic neurotoxin that causes massive release of neurotransmitters from vertebrate (but not invertebrate) nerve terminals and endocrine cells via a complex mechanism involving activation of receptor(s) and toxin insertion into the plasma membrane with subsequent pore formation. Binds to neurexin-1-alpha (NRXN1) in a calcium dependent manner, adhesion G protein-coupled receptor L1 (ADGRL1, also termed latrophilin-1 and calcium-independent receptor of latrotoxin (CIRL)), and receptor-type tyrosine-protein phosphatase S (PTPRS), also termed PTP sigma. NRXN1 and PTPRS are suggested to provide a platform for binding and subsequent pore formation events. In contrast, binding to ADGRL1 does not involve oligomerization and channel formation, but direct downstream stimulation of the synaptic fusion machinery. The sequence is that of Alpha-latrotoxin-Lhe1a from Latrodectus hesperus (Western black widow spider).